The chain runs to 264 residues: Undecaprenyl-diphosphatase 2 (264 aa).

7 consecutive transmembrane segments (helical) span residues 29–49 (GSAF…SYFW), 77–97 (SWIV…SGVL), 107–127 (LTVI…AEIF), 137–157 (ASLA…IPGV), 180–200 (FSFL…LWEL), 212–232 (VLAT…WGLM), and 243–263 (FVIY…MGWL).

Belongs to the UppP family.

Its subcellular location is the cell inner membrane. It catalyses the reaction di-trans,octa-cis-undecaprenyl diphosphate + H2O = di-trans,octa-cis-undecaprenyl phosphate + phosphate + H(+). Its function is as follows. Catalyzes the dephosphorylation of undecaprenyl diphosphate (UPP). Confers resistance to bacitracin. The chain is Undecaprenyl-diphosphatase 2 from Mesorhizobium japonicum (strain LMG 29417 / CECT 9101 / MAFF 303099) (Mesorhizobium loti (strain MAFF 303099)).